A 453-amino-acid polypeptide reads, in one-letter code: UDP-N-acetylmuramate--L-alanyl-gamma-D-glutamyl-meso-2,6-diaminoheptandioate ligase (453 aa).

111–117 (GTHGKTT) contacts ATP.

Belongs to the MurCDEF family. Mpl subfamily. The cofactor is Mg(2+).

The catalysed reaction is UDP-N-acetyl-alpha-D-muramate + L-alanyl-gamma-D-glutamyl-meso-2,6-diaminopimelate + ATP = UDP-N-acetyl-alpha-D-muramoyl-L-alanyl-gamma-D-glutamyl-meso-2,6-diaminopimelate + ADP + phosphate + H(+). Its pathway is cell wall biogenesis; peptidoglycan recycling. Reutilizes the intact tripeptide L-alanyl-gamma-D-glutamyl-meso-diaminopimelate by linking it to UDP-N-acetylmuramate. In Haemophilus influenzae (strain ATCC 51907 / DSM 11121 / KW20 / Rd), this protein is UDP-N-acetylmuramate--L-alanyl-gamma-D-glutamyl-meso-2,6-diaminoheptandioate ligase.